We begin with the raw amino-acid sequence, 196 residues long: Sesquiterpene phosphatase astK (196 aa).

The protein belongs to the HAD-like hydrolase superfamily.

It catalyses the reaction (S,S)-drim-8-en-11-yl phosphate + H2O = (S,S)-drim-8-en-11-ol + phosphate. The protein operates within secondary metabolite biosynthesis; terpenoid biosynthesis. In terms of biological role, sesquiterpene phosphatase; part of the gene cluster that mediates the biosynthesis of astellolides, drimane-type sesquiterpene esters that show antimicrobial, anti-inflammatory, and anti-tumor activities. The first step in astellolide biosynthesis is performed by the sesquiterpene cyclase astC that catalyzes the formation of drimanyl pyrophosphate from farnesyl pyrophosphate. Drimanyl pyrophosphate is then dephosphorylated by the sesquiterpene phosphatase astI to produce drimanyl monophosphate which is further dephosphorylated to drim-8-ene-11-ol by atsK. Drim-8-ene-11-ol is converted to confertifolin, probably by the cytochrome P450 monooxygenase astD and/or the dehydrogenase astE. The cytochrome P450 monooxygenases astB, astF and astJ then hydroxylate confertifolin at C6, C14, or C15 to form trihydroxy confertifolin. The nonribosomal peptide synthetase astA catalyzes ester bond formation between trihydroxy contifolin and benzoic acid (BA) or 4-hydroxy benzoic acid (4HBA), leading to the formation of dideacetyl astellolides A and B, respectively. Finally, the O-acetyltransferase astG converts dideacetyl astellolides A and B into deacetyl astellolides A and B. The sequence is that of Sesquiterpene phosphatase astK from Aspergillus oryzae (strain ATCC 42149 / RIB 40) (Yellow koji mold).